A 207-amino-acid polypeptide reads, in one-letter code: BON1-associated protein 2 (207 aa).

A C2 domain is found at 1–112 (MSYSTFKRSL…GFAPQGHLNF (112 aa)).

Interacts with BON1, BON2 and BON3. Expressed in roots, leaves, stems and flowers.

The protein resides in the membrane. Functionally, negative regulator of cell death and defense responses. Exhibits calcium-dependent phospholipid binding properties. This is BON1-associated protein 2 (BAP2) from Arabidopsis thaliana (Mouse-ear cress).